The chain runs to 415 residues: Serine hydroxymethyltransferase (415 aa).

(6S)-5,6,7,8-tetrahydrofolate is bound by residues L117 and 121 to 123; that span reads GHL. At K226 the chain carries N6-(pyridoxal phosphate)lysine. Residue E241 coordinates (6S)-5,6,7,8-tetrahydrofolate.

Belongs to the SHMT family. Homodimer. The cofactor is pyridoxal 5'-phosphate.

Its subcellular location is the cytoplasm. The catalysed reaction is (6R)-5,10-methylene-5,6,7,8-tetrahydrofolate + glycine + H2O = (6S)-5,6,7,8-tetrahydrofolate + L-serine. It participates in one-carbon metabolism; tetrahydrofolate interconversion. It functions in the pathway amino-acid biosynthesis; glycine biosynthesis; glycine from L-serine: step 1/1. Its function is as follows. Catalyzes the reversible interconversion of serine and glycine with tetrahydrofolate (THF) serving as the one-carbon carrier. This reaction serves as the major source of one-carbon groups required for the biosynthesis of purines, thymidylate, methionine, and other important biomolecules. Also exhibits THF-independent aldolase activity toward beta-hydroxyamino acids, producing glycine and aldehydes, via a retro-aldol mechanism. This Bacillus subtilis (strain 168) protein is Serine hydroxymethyltransferase.